Reading from the N-terminus, the 324-residue chain is Beta-ketoacyl-[acyl-carrier-protein] synthase III (324 aa).

Catalysis depends on residues C112 and H249. The segment at 250-254 (QANRR) is ACP-binding. N279 is a catalytic residue.

It belongs to the thiolase-like superfamily. FabH family. As to quaternary structure, homodimer.

It is found in the cytoplasm. It catalyses the reaction malonyl-[ACP] + acetyl-CoA + H(+) = 3-oxobutanoyl-[ACP] + CO2 + CoA. The protein operates within lipid metabolism; fatty acid biosynthesis. Its function is as follows. Catalyzes the condensation reaction of fatty acid synthesis by the addition to an acyl acceptor of two carbons from malonyl-ACP. Catalyzes the first condensation reaction which initiates fatty acid synthesis and may therefore play a role in governing the total rate of fatty acid production. Possesses both acetoacetyl-ACP synthase and acetyl transacylase activities. Its substrate specificity determines the biosynthesis of branched-chain and/or straight-chain of fatty acids. This Streptococcus pyogenes serotype M2 (strain MGAS10270) protein is Beta-ketoacyl-[acyl-carrier-protein] synthase III.